The sequence spans 167 residues: Ubiquitin-conjugating enzyme E2 14 (167 aa).

A2 bears the N-acetylalanine mark. Residues 5-165 (QASLLLQKQL…VSRCVRRSQE (161 aa)) enclose the UBC core domain. Residue C90 is the Glycyl thioester intermediate of the active site.

Belongs to the ubiquitin-conjugating enzyme family.

The enzyme catalyses S-ubiquitinyl-[E1 ubiquitin-activating enzyme]-L-cysteine + [E2 ubiquitin-conjugating enzyme]-L-cysteine = [E1 ubiquitin-activating enzyme]-L-cysteine + S-ubiquitinyl-[E2 ubiquitin-conjugating enzyme]-L-cysteine.. It participates in protein modification; protein ubiquitination. Accepts the ubiquitin from the E1 complex and catalyzes its covalent attachment to other proteins. Involved in the formation of multiubiquitin chains. Signal the protein for selective degradation. In Arabidopsis thaliana (Mouse-ear cress), this protein is Ubiquitin-conjugating enzyme E2 14 (UBC14).